Here is a 116-residue protein sequence, read N- to C-terminus: MTNHKLIEAVTKSQLRTDLPSFRPGDTLRVHVRIIEGTRERIQVFEGIVIKRRGGGVSETFTVRKISSGVGVERTFPLHTPKIEKIEVKRRGKVRRAKLYYLRSLRGKAARIQEIR.

The protein belongs to the bacterial ribosomal protein bL19 family.

In terms of biological role, this protein is located at the 30S-50S ribosomal subunit interface and may play a role in the structure and function of the aminoacyl-tRNA binding site. This chain is Large ribosomal subunit protein bL19, found in Staphylococcus aureus (strain Mu3 / ATCC 700698).